The following is a 457-amino-acid chain: Putative F-box protein At3g58860 (457 aa).

The 49-residue stretch at 6-54 folds into the F-box domain; the sequence is MDLFSKLPDEVISHILSSLPTKEAASTSVLAKKWRYLFAFVPSLDFNDS.

The protein is Putative F-box protein At3g58860 of Arabidopsis thaliana (Mouse-ear cress).